A 334-amino-acid polypeptide reads, in one-letter code: Malate dehydrogenase, cytoplasmic (334 aa).

Ser2 carries the N-acetylserine modification. NAD(+)-binding positions include 11 to 17 (GAAGQIA) and Asp42. Residues Arg92 and Arg98 each coordinate substrate. Residue Asn105 coordinates NAD(+). Lys110 carries the post-translational modification N6-succinyllysine. Gln112 contributes to the NAD(+) binding site. N6-acetyllysine is present on residues Lys118 and Lys121. NAD(+) is bound at residue 129-131 (VGN). Residues Asn131 and Arg162 each contribute to the substrate site. The active-site Proton acceptor is the His187. Lys214 carries the N6-succinyllysine modification. Residue Ser217 is modified to Phosphoserine. Arg230 bears the Omega-N-methylarginine mark. Ser241 is modified (phosphoserine). An N6-acetyllysine; alternate modification is found at Lys298. Lys298 carries the post-translational modification N6-succinyllysine; alternate. Ser309 carries the phosphoserine modification. Residue Lys318 is modified to N6-succinyllysine. A phosphoserine mark is found at Ser332 and Ser333.

Belongs to the LDH/MDH superfamily. MDH type 2 family. Homodimer. ISGylated. In terms of processing, acetylation at Lys-118 dramatically enhances enzymatic activity and promotes adipogenic differentiation.

Its subcellular location is the cytoplasm. The protein localises to the cytosol. The catalysed reaction is (S)-malate + NAD(+) = oxaloacetate + NADH + H(+). The enzyme catalyses (2R)-2-hydroxy-3-(4-hydroxyphenyl)propanoate + NAD(+) = 3-(4-hydroxyphenyl)pyruvate + NADH + H(+). It catalyses the reaction (S)-2-hydroxyglutarate + NAD(+) = 2-oxoglutarate + NADH + H(+). In terms of biological role, catalyzes the reduction of aromatic alpha-keto acids in the presence of NADH. Plays essential roles in the malate-aspartate shuttle and the tricarboxylic acid cycle, important in mitochondrial NADH supply for oxidative phosphorylation. Catalyzes the reduction of 2-oxoglutarate to 2-hydroxyglutarate, leading to elevated reactive oxygen species (ROS). This chain is Malate dehydrogenase, cytoplasmic, found in Homo sapiens (Human).